Here is a 217-residue protein sequence, read N- to C-terminus: Uracil-DNA glycosylase (217 aa).

The active-site Proton acceptor is the aspartate 62.

Belongs to the uracil-DNA glycosylase (UDG) superfamily. UNG family.

It is found in the cytoplasm. It catalyses the reaction Hydrolyzes single-stranded DNA or mismatched double-stranded DNA and polynucleotides, releasing free uracil.. Excises uracil residues from the DNA which can arise as a result of misincorporation of dUMP residues by DNA polymerase or due to deamination of cytosine. The chain is Uracil-DNA glycosylase from Streptococcus pneumoniae (strain P1031).